Reading from the N-terminus, the 47-residue chain is Delta-actitoxin-Aspp1b (47 aa).

Cystine bridges form between Cys4/Cys44, Cys6/Cys34, and Cys27/Cys45.

Belongs to the sea anemone sodium channel inhibitory toxin family. Type I subfamily.

The protein resides in the secreted. The protein localises to the nematocyst. Its function is as follows. Binds specifically to voltage-gated sodium channels (Nav), thereby delaying their inactivation during signal transduction. Has a longer mammalian heart stimulation effect than Hk2a, Hk8a and Hk16a. The chain is Delta-actitoxin-Aspp1b from Anthopleura sp. (strain 'Zhanjiang') (Sea anemone).